Reading from the N-terminus, the 471-residue chain is UDP-N-acetylmuramoylalanine--D-glutamate ligase (471 aa).

123 to 129 contributes to the ATP binding site; that stretch reads GTNGKST.

The protein belongs to the MurCDEF family.

The protein localises to the cytoplasm. The enzyme catalyses UDP-N-acetyl-alpha-D-muramoyl-L-alanine + D-glutamate + ATP = UDP-N-acetyl-alpha-D-muramoyl-L-alanyl-D-glutamate + ADP + phosphate + H(+). It participates in cell wall biogenesis; peptidoglycan biosynthesis. Functionally, cell wall formation. Catalyzes the addition of glutamate to the nucleotide precursor UDP-N-acetylmuramoyl-L-alanine (UMA). This is UDP-N-acetylmuramoylalanine--D-glutamate ligase from Caulobacter vibrioides (strain ATCC 19089 / CIP 103742 / CB 15) (Caulobacter crescentus).